A 147-amino-acid chain; its full sequence is uncharacterized protein (147 aa).

Residues 1–137 (MRDNTIGSLI…LYELMTKVHK (137 aa)) form the HTH marR-type domain. A DNA-binding region (H-T-H motif) is located at residues 53 to 76 (QMELAEKVTVTQGGISRMLTRLEK).

This is an uncharacterized protein from Bacillus anthracis.